Consider the following 518-residue polypeptide: Protein translocase subunit SecD (518 aa).

The next 6 membrane-spanning stretches (helical) occupy residues Ile-9–Gln-29, Leu-361–Phe-381, Ile-384–Leu-404, Leu-406–Ile-426, Phe-452–Val-474, and Ile-486–Trp-506.

This sequence belongs to the SecD/SecF family. SecD subfamily. In terms of assembly, forms a complex with SecF. Part of the essential Sec protein translocation apparatus which comprises SecA, SecYEG and auxiliary proteins SecDF-YajC and YidC.

It is found in the cell inner membrane. Functionally, part of the Sec protein translocase complex. Interacts with the SecYEG preprotein conducting channel. SecDF uses the proton motive force (PMF) to complete protein translocation after the ATP-dependent function of SecA. This Rickettsia conorii (strain ATCC VR-613 / Malish 7) protein is Protein translocase subunit SecD.